The chain runs to 815 residues: Probable bifunctional folylpolyglutamate synthase/dihydropteroate synthase (815 aa).

A folylpolyglutamate synthase region spans residues 1–416 (MRYDEAANFL…LVAGSLFAVA (416 aa)). ATP is bound at residue 47–53 (GSNGKGS). Positions 553–803 (TAVMGILNVT…DVPENVAAVR (251 aa)) constitute a Pterin-binding domain. Residues 555–815 (VMGILNVTPD…EATRTGADAE (261 aa)) are DHPS. Asparagine 560 is a Mg(2+) binding site. Residues threonine 600, aspartate 633, asparagine 652, aspartate 722, lysine 758, and 791 to 793 (RVH) contribute to the (7,8-dihydropterin-6-yl)methyl diphosphate site.

The protein in the N-terminal section; belongs to the folylpolyglutamate synthase family. It in the C-terminal section; belongs to the DHPS family. It depends on Mg(2+) as a cofactor.

The catalysed reaction is (6S)-5,6,7,8-tetrahydrofolyl-(gamma-L-Glu)(n) + L-glutamate + ATP = (6S)-5,6,7,8-tetrahydrofolyl-(gamma-L-Glu)(n+1) + ADP + phosphate + H(+). It catalyses the reaction (7,8-dihydropterin-6-yl)methyl diphosphate + 4-aminobenzoate = 7,8-dihydropteroate + diphosphate. Its pathway is cofactor biosynthesis; tetrahydrofolylpolyglutamate biosynthesis. It functions in the pathway cofactor biosynthesis; tetrahydrofolate biosynthesis; 7,8-dihydrofolate from 2-amino-4-hydroxy-6-hydroxymethyl-7,8-dihydropteridine diphosphate and 4-aminobenzoate: step 1/2. Can complement an H.volcanii mutant strain that is thymidine auxotroph because it lacks the two dihydrofolate reductase genes encoded by hdrA and hdrB. The chain is Probable bifunctional folylpolyglutamate synthase/dihydropteroate synthase (folP) from Halobacterium salinarum (strain ATCC 700922 / JCM 11081 / NRC-1) (Halobacterium halobium).